Here is a 194-residue protein sequence, read N- to C-terminus: UPF0301 protein CBU_2093 (194 aa).

Belongs to the UPF0301 (AlgH) family.

The polypeptide is UPF0301 protein CBU_2093 (Coxiella burnetii (strain RSA 493 / Nine Mile phase I)).